The chain runs to 922 residues: Neuropilin-1 (922 aa).

Positions 1–21 (MERGLPLLCATLALALALAGA) are cleaved as a signal peptide. At 22-855 (FRSDKCGGTI…PGNVLKTLDP (834 aa)) the chain is on the extracellular side. Disulfide bonds link C27/C54, C82/C104, and C147/C173. CUB domains are found at residues 27–141 (CGGT…YEIF) and 147–265 (CSQN…YSVL). N150 carries N-linked (GlcNAc...) asparagine glycosylation. Ca(2+)-binding residues include E195, D209, and D250. C206 and C228 are oxidised to a cystine. N-linked (GlcNAc...) asparagine glycans are attached at residues N261, N300, and N522. Cystine bridges form between C275/C424 and C431/C583. F5/8 type C domains are found at residues 275-424 (CMEA…VYGC) and 431-583 (CSGM…LLGC). A glycan (O-linked (Xyl...) (chondroitin sulfate) serine; alternate) is linked at S612. An O-linked (Xyl...) (heparan sulfate) serine; alternate glycan is attached at S612. Positions 645 to 811 (TYGFNCEFGW…NHIPQEDCAK (167 aa)) constitute an MAM domain. S829 carries an O-linked (Xyl...) (chondroitin sulfate) serine glycan. An N-linked (GlcNAc...) asparagine glycan is attached at N841. The helical transmembrane segment at 856-880 (ILITIIAMSALGVLLGAVCGVVLYC) threads the bilayer. Residues 881–922 (ACWHNGMSERNLSALENYNFELVDGVKLKKDKLNPQSNYSEA) lie on the Cytoplasmic side of the membrane. Residue S893 is modified to Phosphoserine.

This sequence belongs to the neuropilin family. In terms of assembly, homodimer, and heterodimer with NRP2. Binds PLXNB1. Interacts with FER. Interacts with VEGFA. Interacts with ABCB8/MITOSUR in mitochondria. In terms of tissue distribution, found in the embryonic nervous system. Expressed in dorsal root ganglia.

It localises to the mitochondrion membrane. The protein resides in the cell membrane. The protein localises to the cytoplasm. Functionally, cell-surface receptor involved in the development of the cardiovascular system, in angiogenesis, in the formation of certain neuronal circuits and in organogenesis outside the nervous system. Mediates the chemorepulsant activity of semaphorins. Recognizes a C-end rule (CendR) motif R/KXXR/K on its ligands which causes cellular internalization and vascular leakage. It binds to semaphorin 3A, the PLGF-2 isoform of PGF, the VEGF165 isoform of VEGFA and VEGFB. Coexpression with KDR results in increased VEGF165 binding to KDR as well as increased chemotaxis. Regulates VEGF-induced angiogenesis. Binding to VEGFA initiates a signaling pathway needed for motor neuron axon guidance and cell body migration, including for the caudal migration of facial motor neurons from rhombomere 4 to rhombomere 6 during embryonic development. Regulates mitochondrial iron transport via interaction with ABCB8/MITOSUR. The polypeptide is Neuropilin-1 (Nrp1) (Rattus norvegicus (Rat)).